A 437-amino-acid chain; its full sequence is Coiled-coil domain-containing protein 78 (437 aa).

Coiled-coil stretches lie at residues 83 to 114 (HLRE…LHGN), 147 to 287 (EELK…QRQE), and 360 to 408 (QRLQ…YKQE).

The protein belongs to the CCDC78 family.

Its subcellular location is the cytoplasm. The protein resides in the cytoskeleton. It localises to the microtubule organizing center. The protein localises to the centrosome. It is found in the centriole. Its subcellular location is the perinuclear region. The protein resides in the cell membrane. It localises to the sarcolemma. The protein localises to the sarcoplasmic reticulum. In terms of biological role, component of the deuterosome, a structure that promotes de novo centriole amplification in multiciliated cells that can generate more than 100 centrioles. Deuterosome-mediated centriole amplification occurs in terminally differentiated multiciliated cells (G1/0) and not in S phase. Essential for centriole amplification and is required for CEP152 localization to the deuterosome. This chain is Coiled-coil domain-containing protein 78 (Ccdc78), found in Mus musculus (Mouse).